A 607-amino-acid chain; its full sequence is Fatty acid amide hydrolase (607 aa).

Catalysis depends on charge relay system residues Lys-205 and Ser-281. 302 to 305 (GGGS) serves as a coordination point for substrate. Ser-305 (acyl-ester intermediate) is an active-site residue.

Belongs to the amidase family. In terms of assembly, forms homodimers. In terms of tissue distribution, expressed in roots, leaves and flowers. Expressed in seedlings, flowers, roots, siliques, seeds and leaves.

It is found in the endoplasmic reticulum membrane. Its subcellular location is the cell membrane. The catalysed reaction is N-(5Z,8Z,11Z,14Z-eicosatetraenoyl)-ethanolamine + H2O = ethanolamine + (5Z,8Z,11Z,14Z)-eicosatetraenoate. The enzyme catalyses N-(9Z,12Z-octadecadienoyl)-ethanolamine + H2O = ethanolamine + (9Z,12Z)-octadecadienoate. It catalyses the reaction N-hexadecanoylethanolamine + H2O = ethanolamine + hexadecanoate. It carries out the reaction N-tetradecanoylethanolamine + H2O = tetradecanoate + ethanolamine. The catalysed reaction is N-dodecanoylethanolamine + H2O = dodecanoate + ethanolamine. Its activity is regulated as follows. Inhibited by methyl arachidonyl fluorophosphonate (MAFP). Functionally, catalyzes the hydrolysis of bioactive endogenous fatty acid amides to their corresponding acids. The hydrolysis of endogenous amidated lipids terminates their participation as lipid mediators in various signaling systems. Converts a wide range of N-acylethanolamines (NAEs) to their corresponding free fatty acids and ethanolamine. Can use oleamide as substrate, but not indole-3-acetamide, 1-naphtalene-acetamide, nicotinic acid amide or L-asparagine. Can use 2-arachidonylglycerol as substrate. Participates in the regulation of plant growth. Hydrolyzes N-dodecanoylethanolamine, which is has a growth inhibitory effect on seedling growth. Involved in plant defense signaling. Involved in abscisic acid (ABA) signaling through mechanisms that are independent of the catalytic activity. Involved in the regulation of flowering time. Catalyzes the hydrolysis of N-acyl L-homoserine lactones (AHLs), which are a class of signaling molecules produced by bacteria for quorum sensing. Accumulation of L-homoserine appears to encourage plant growth at low concentrations by stimulating transpiration, but higher concentrations inhibit growth by stimulating ethylene production. The polypeptide is Fatty acid amide hydrolase (Arabidopsis thaliana (Mouse-ear cress)).